A 372-amino-acid polypeptide reads, in one-letter code: 3,5-dihydroxyphenylacetyl-CoA synthase (372 aa).

The active site involves cysteine 160.

It belongs to the thiolase-like superfamily. Chalcone/stilbene synthases family.

It catalyses the reaction 4 malonyl-CoA + 4 H(+) = (3,5-dihydroxyphenyl)acetyl-CoA + 4 CO2 + 3 CoA + H2O. Its pathway is antibiotic biosynthesis. Its function is as follows. Involved in the biosynthesis of the nonproteinogenic amino acid monomer (S)-3,5-dihydroxyphenylglycine (Dpg) responsible of the production of balhimycin antibiotic. Catalyzes the Claisen condensation of four molecules of malonyl-CoA to yield 3,5-dihydroxyphenylacetyl-CoA (DPA-CoA) and three free coenzyme A (CoA). DpgA requires the presence of the dehydratases DpgB and DpgD to facilitate the aromatization of the DPA-S-DgpA or DPA-S-CoA intermediate. The protein is 3,5-dihydroxyphenylacetyl-CoA synthase of Amycolatopsis balhimycina.